The primary structure comprises 306 residues: tRNA dimethylallyltransferase (306 aa).

Residue 13–20 (GPTGAGKT) participates in ATP binding. Position 15-20 (15-20 (TGAGKT)) interacts with substrate. Interaction with substrate tRNA regions lie at residues 38-41 (DSRQ) and 161-165 (QRNAR).

This sequence belongs to the IPP transferase family. As to quaternary structure, monomer. Mg(2+) serves as cofactor.

The catalysed reaction is adenosine(37) in tRNA + dimethylallyl diphosphate = N(6)-dimethylallyladenosine(37) in tRNA + diphosphate. In terms of biological role, catalyzes the transfer of a dimethylallyl group onto the adenine at position 37 in tRNAs that read codons beginning with uridine, leading to the formation of N6-(dimethylallyl)adenosine (i(6)A). This Maridesulfovibrio salexigens (strain ATCC 14822 / DSM 2638 / NCIMB 8403 / VKM B-1763) (Desulfovibrio salexigens) protein is tRNA dimethylallyltransferase.